A 435-amino-acid chain; its full sequence is MTTVSYVTILLTVLVQVLTSDAKATNNKRELSSGLKERSLSDDAPQFWKGRFSRSEEDPQFWKGRFSDPQFWKGRFSDPQFWKGRFSDPQFWKGRFSDPQFWKGRFSDPQFWKGRFSDPQFWKGRFSDGTKRENDPQYWKGRFSRSFEDQPDSEAQFWKGRFARTSSGEKREPQYWKGRFSRDSVPGRYGRELQGRFGRELQGRFGREAQGRFGRELQGRFGREFQGRFGREDQGRFGREDQGRFGREDQGRFGREDQGRFGREDQGRFGREDQGRFGRELQGRFGREFQGRFGREDQGRFGREDQGRFGRELQGRFGREDQGRFGREDQGRFGREDLAKEDQGRFGREDLAKEDQGRFGREDIAEADQGRFGRNAAAAAAAAAAAKKRTIDVIDIESDPKPQTRFRDGKDMQEKRKVEKKDKIEKSDDALAKTS.

A signal peptide spans 1-22 (MTTVSYVTILLTVLVQVLTSDA). A propeptide spanning residues 23 to 193 (KATNNKRELS…SVPGRYGREL (171 aa)) is cleaved from the precursor. Position 194 is a pyrrolidone carboxylic acid (Gln-194). Phe-197 is modified (phenylalanine amide). A propeptide spanning residues 199–201 (REL) is cleaved from the precursor. The residue at position 205 (Phe-205) is a Phenylalanine amide. Residues 207–209 (REA) constitute a propeptide that is removed on maturation. Position 213 is a phenylalanine amide (Phe-213). Positions 215 to 217 (REL) are excised as a propeptide. Phe-221 is subject to Phenylalanine amide. Residues 223–225 (REF) constitute a propeptide that is removed on maturation. Position 229 is a phenylalanine amide (Phe-229). Residues 230–371 (GREDQGRFGR…EDIAEADQGR (142 aa)) show a composition bias toward basic and acidic residues. Disordered stretches follow at residues 230 to 374 (GRED…RFGR) and 386 to 435 (AKKR…AKTS). A propeptide spanning residues 231 to 233 (RED) is cleaved from the precursor. Residue Phe-237 is modified to Phenylalanine amide. A propeptide spanning residues 239–241 (RED) is cleaved from the precursor. Residue Phe-245 is modified to Phenylalanine amide. Residues 247–249 (RED) constitute a propeptide that is removed on maturation. Phe-253 carries the phenylalanine amide modification. The propeptide occupies 255 to 257 (RED). Phenylalanine amide is present on Phe-261. Positions 263–265 (RED) are excised as a propeptide. Phe-269 is modified (phenylalanine amide). Residues 271 to 273 (RED) constitute a propeptide that is removed on maturation. Phe-277 carries the post-translational modification Phenylalanine amide. Residues 279-281 (REL) constitute a propeptide that is removed on maturation. Residue Phe-285 is modified to Phenylalanine amide. Residues 287–289 (REF) constitute a propeptide that is removed on maturation. Residue Phe-293 is modified to Phenylalanine amide. The propeptide occupies 295–297 (RED). Phenylalanine amide is present on Phe-301. Residues 303 to 305 (RED) constitute a propeptide that is removed on maturation. The residue at position 309 (Phe-309) is a Phenylalanine amide. Residues 311–313 (REL) constitute a propeptide that is removed on maturation. Phe-317 carries the post-translational modification Phenylalanine amide. Residues 319–321 (RED) constitute a propeptide that is removed on maturation. At Phe-325 the chain carries Phenylalanine amide. The propeptide occupies 327–329 (RED). Phe-333 bears the Phenylalanine amide mark. A propeptide spanning residues 335–342 (REDLAKED) is cleaved from the precursor. Phe-346 is modified (phenylalanine amide). Residues 348 to 355 (REDLAKED) constitute a propeptide that is removed on maturation. A Phenylalanine amide modification is found at Phe-359. The propeptide occupies 361–368 (REDIAEAD). Phe-372 carries the post-translational modification Phenylalanine amide. The propeptide occupies 374 to 435 (RNAAAAAAAA…KSDDALAKTS (62 aa)). The span at 398-435 (SDPKPQTRFRDGKDMQEKRKVEKKDKIEKSDDALAKTS) shows a compositional bias: basic and acidic residues.

It belongs to the FARP (FMRFamide related peptide) family.

The protein resides in the secreted. Not known but it could act as a transmitter at neuromuscular synapses. The protein is Antho-RFamide neuropeptides type 1 of Anthopleura elegantissima (Green aggregating anemone).